The sequence spans 336 residues: D-alanine--D-alanine ligase (336 aa).

The ATP-grasp domain occupies 124–330; the sequence is KMWFSALGIP…FTQYLSLVIN (207 aa). 154–209 provides a ligand contact to ATP; sequence ALEKWGSIFVKAASQGSSVGCYKVDEASKVLGVLKDAFGYAPYVIVEKTIKARELE. Mg(2+) contacts are provided by Asp284, Glu297, and Asn299.

This sequence belongs to the D-alanine--D-alanine ligase family. Requires Mg(2+) as cofactor. Mn(2+) is required as a cofactor.

The protein resides in the cytoplasm. It carries out the reaction 2 D-alanine + ATP = D-alanyl-D-alanine + ADP + phosphate + H(+). The protein operates within cell wall biogenesis; peptidoglycan biosynthesis. In terms of biological role, cell wall formation. This chain is D-alanine--D-alanine ligase, found in Shewanella oneidensis (strain ATCC 700550 / JCM 31522 / CIP 106686 / LMG 19005 / NCIMB 14063 / MR-1).